The primary structure comprises 356 residues: Putative aminopeptidase FrvX (356 aa).

A divalent metal cation-binding residues include His61 and Asp175. Glu205 (proton acceptor) is an active-site residue. Residues Glu206, Asp228, and His316 each coordinate a divalent metal cation.

The protein belongs to the peptidase M42 family. Requires a divalent metal cation as cofactor.

The protein is Putative aminopeptidase FrvX (frvX) of Escherichia coli (strain K12).